Here is a 241-residue protein sequence, read N- to C-terminus: Probable transcriptional regulatory protein lmo1535 (241 aa).

The segment covering 1 to 14 has biased composition (polar residues); it reads MSGHSKWNNIQGRK. The interval 1 to 22 is disordered; the sequence is MSGHSKWNNIQGRKNAQDSKRS.

Belongs to the TACO1 family.

The protein localises to the cytoplasm. This is Probable transcriptional regulatory protein lmo1535 from Listeria monocytogenes serovar 1/2a (strain ATCC BAA-679 / EGD-e).